Consider the following 152-residue polypeptide: Large ribosomal subunit protein bL9 (152 aa).

This sequence belongs to the bacterial ribosomal protein bL9 family.

Functionally, binds to the 23S rRNA. This Synechococcus sp. (strain CC9902) protein is Large ribosomal subunit protein bL9.